An 86-amino-acid chain; its full sequence is Small ribosomal subunit protein bS18 (86 aa).

Belongs to the bacterial ribosomal protein bS18 family. Part of the 30S ribosomal subunit. Forms a tight heterodimer with protein bS6.

Its function is as follows. Binds as a heterodimer with protein bS6 to the central domain of the 16S rRNA, where it helps stabilize the platform of the 30S subunit. The chain is Small ribosomal subunit protein bS18 from Campylobacter concisus (strain 13826).